The primary structure comprises 398 residues: Tyrosine--tRNA ligase (398 aa).

A 'HIGH' region motif is present at residues 48 to 57 (PTGADIHLGH). The 'KMSKS' region signature appears at 235-239 (KMSKS). Lys238 serves as a coordination point for ATP. The region spanning 334-398 (VKLAYLLGAT…GKNKFMRLVP (65 aa)) is the S4 RNA-binding domain.

It belongs to the class-I aminoacyl-tRNA synthetase family. TyrS type 2 subfamily. In terms of assembly, homodimer.

The protein localises to the cytoplasm. The catalysed reaction is tRNA(Tyr) + L-tyrosine + ATP = L-tyrosyl-tRNA(Tyr) + AMP + diphosphate + H(+). Its function is as follows. Catalyzes the attachment of tyrosine to tRNA(Tyr) in a two-step reaction: tyrosine is first activated by ATP to form Tyr-AMP and then transferred to the acceptor end of tRNA(Tyr). In Nostoc sp. (strain PCC 7120 / SAG 25.82 / UTEX 2576), this protein is Tyrosine--tRNA ligase.